A 158-amino-acid polypeptide reads, in one-letter code: Transcriptional repressor NrdR (158 aa).

A zinc finger spans residues 3–34; it reads CPSCQNTDSRVLESRAAEGGRSVRRRRECLNC. In terms of domain architecture, ATP-cone spans 49–139; sequence ITVIKRNGHR…VYRHFRSVSD (91 aa).

The protein belongs to the NrdR family. It depends on Zn(2+) as a cofactor.

In terms of biological role, negatively regulates transcription of bacterial ribonucleotide reductase nrd genes and operons by binding to NrdR-boxes. The sequence is that of Transcriptional repressor NrdR from Synechococcus sp. (strain CC9311).